We begin with the raw amino-acid sequence, 600 residues long: Cytidine monophosphate-N-acetylneuraminic acid hydroxylase (600 aa).

The 99-residue stretch at 9–107 (LSPVEVASLK…VEMDENNRLL (99 aa)) folds into the Rieske domain. Positions 49, 51, 70, and 73 each coordinate [2Fe-2S] cluster.

It belongs to the CMP-Neu5Ac hydroxylase family. Requires [2Fe-2S] cluster as cofactor.

Its subcellular location is the cytoplasm. It carries out the reaction CMP-N-acetyl-beta-neuraminate + 2 Fe(II)-[cytochrome b5] + O2 + 2 H(+) = CMP-N-glycoloyl-beta-neuraminate + 2 Fe(III)-[cytochrome b5] + H2O. Its pathway is amino-sugar metabolism; N-acetylneuraminate metabolism. Sialic acids are components of carbohydrate chains of glycoconjugates and are involved in cell-cell recognition and cell-pathogen interactions. Catalyzes the conversion of CMP-N-acetylneuraminic acid (CMP-Neu5Ac) into its hydroxylated derivative CMP-N-glycolylneuraminic acid (CMP-Neu5Gc), a sialic acid abundantly expressed at the surface of many cells. This is Cytidine monophosphate-N-acetylneuraminic acid hydroxylase (CMAH) from Gorilla gorilla gorilla (Western lowland gorilla).